Reading from the N-terminus, the 323-residue chain is Thiamine-monophosphate kinase (323 aa).

Mg(2+) is bound by residues Asp-30, Ser-45, Thr-46, and Asp-47. His-54 serves as a coordination point for substrate. Mg(2+) is bound by residues Asp-75 and Asp-122. Residues 121-122 (GD) and Arg-146 each bind ATP. A Mg(2+)-binding site is contributed by Asp-212. Ser-214 provides a ligand contact to ATP. A Mg(2+)-binding site is contributed by Asp-215. The substrate site is built by Glu-263 and Phe-319.

It belongs to the thiamine-monophosphate kinase family.

It catalyses the reaction thiamine phosphate + ATP = thiamine diphosphate + ADP. It functions in the pathway cofactor biosynthesis; thiamine diphosphate biosynthesis; thiamine diphosphate from thiamine phosphate: step 1/1. In terms of biological role, catalyzes the ATP-dependent phosphorylation of thiamine-monophosphate (TMP) to form thiamine-pyrophosphate (TPP), the active form of vitamin B1. This Buchnera aphidicola subsp. Acyrthosiphon pisum (strain APS) (Acyrthosiphon pisum symbiotic bacterium) protein is Thiamine-monophosphate kinase.